We begin with the raw amino-acid sequence, 119 residues long: Small ribosomal subunit protein uS13 (119 aa).

The tract at residues G94–K119 is disordered.

It belongs to the universal ribosomal protein uS13 family. As to quaternary structure, part of the 30S ribosomal subunit. Forms a loose heterodimer with protein S19. Forms two bridges to the 50S subunit in the 70S ribosome.

Located at the top of the head of the 30S subunit, it contacts several helices of the 16S rRNA. In the 70S ribosome it contacts the 23S rRNA (bridge B1a) and protein L5 of the 50S subunit (bridge B1b), connecting the 2 subunits; these bridges are implicated in subunit movement. Contacts the tRNAs in the A and P-sites. This is Small ribosomal subunit protein uS13 from Alkalilimnicola ehrlichii (strain ATCC BAA-1101 / DSM 17681 / MLHE-1).